The chain runs to 378 residues: Dual-specificity RNA methyltransferase RlmN (378 aa).

The active-site Proton acceptor is the glutamate 96. The Radical SAM core domain occupies 102–342 (QGGRGTLCVS…VRTTRGDDID (241 aa)). Cysteines 109 and 345 form a disulfide. [4Fe-4S] cluster-binding residues include cysteine 116, cysteine 120, and cysteine 123. Residues 170-171 (GE), serine 202, 224-226 (SLH), and asparagine 302 each bind S-adenosyl-L-methionine. Cysteine 345 (S-methylcysteine intermediate) is an active-site residue.

It belongs to the radical SAM superfamily. RlmN family. [4Fe-4S] cluster serves as cofactor.

It is found in the cytoplasm. The enzyme catalyses adenosine(2503) in 23S rRNA + 2 reduced [2Fe-2S]-[ferredoxin] + 2 S-adenosyl-L-methionine = 2-methyladenosine(2503) in 23S rRNA + 5'-deoxyadenosine + L-methionine + 2 oxidized [2Fe-2S]-[ferredoxin] + S-adenosyl-L-homocysteine. It catalyses the reaction adenosine(37) in tRNA + 2 reduced [2Fe-2S]-[ferredoxin] + 2 S-adenosyl-L-methionine = 2-methyladenosine(37) in tRNA + 5'-deoxyadenosine + L-methionine + 2 oxidized [2Fe-2S]-[ferredoxin] + S-adenosyl-L-homocysteine. Its function is as follows. Specifically methylates position 2 of adenine 2503 in 23S rRNA and position 2 of adenine 37 in tRNAs. m2A2503 modification seems to play a crucial role in the proofreading step occurring at the peptidyl transferase center and thus would serve to optimize ribosomal fidelity. The protein is Dual-specificity RNA methyltransferase RlmN of Pseudomonas paraeruginosa (strain DSM 24068 / PA7) (Pseudomonas aeruginosa (strain PA7)).